We begin with the raw amino-acid sequence, 523 residues long: 2-isopropylmalate synthase (523 aa).

The region spanning 5–267 (VIIFDTTLRD…HTNINHHEIW (263 aa)) is the Pyruvate carboxyltransferase domain. Asp14, His202, His204, and Asn238 together coordinate Mn(2+). Residues 392–523 (RLDYFSVQSG…QNKENNKETV (132 aa)) form a regulatory domain region.

It belongs to the alpha-IPM synthase/homocitrate synthase family. LeuA type 1 subfamily. In terms of assembly, homodimer. The cofactor is Mn(2+).

It is found in the cytoplasm. It carries out the reaction 3-methyl-2-oxobutanoate + acetyl-CoA + H2O = (2S)-2-isopropylmalate + CoA + H(+). It functions in the pathway amino-acid biosynthesis; L-leucine biosynthesis; L-leucine from 3-methyl-2-oxobutanoate: step 1/4. Functionally, catalyzes the condensation of the acetyl group of acetyl-CoA with 3-methyl-2-oxobutanoate (2-ketoisovalerate) to form 3-carboxy-3-hydroxy-4-methylpentanoate (2-isopropylmalate). The sequence is that of 2-isopropylmalate synthase from Klebsiella pneumoniae (strain 342).